We begin with the raw amino-acid sequence, 95 residues long: Protein TusB (95 aa).

It belongs to the DsrH/TusB family. In terms of assembly, heterohexamer, formed by a dimer of trimers. The hexameric TusBCD complex contains 2 copies each of TusB, TusC and TusD. The TusBCD complex interacts with TusE.

It is found in the cytoplasm. Part of a sulfur-relay system required for 2-thiolation of 5-methylaminomethyl-2-thiouridine (mnm(5)s(2)U) at tRNA wobble positions. The protein is Protein TusB of Yersinia enterocolitica serotype O:8 / biotype 1B (strain NCTC 13174 / 8081).